Consider the following 317-residue polypeptide: Sulfate adenylyltransferase subunit 2 (317 aa).

A compositionally biased stretch (basic and acidic residues) spans 1-10 (MPHTLPETEL). Disordered regions lie at residues 1–21 (MPHTLPETELHNPQSTKPPLD) and 295–317 (RQGRAIDRDQAGSMEKKKREGYF).

The protein belongs to the PAPS reductase family. CysD subfamily. Heterodimer composed of CysD, the smaller subunit, and CysN.

It carries out the reaction sulfate + ATP + H(+) = adenosine 5'-phosphosulfate + diphosphate. Its pathway is sulfur metabolism; hydrogen sulfide biosynthesis; sulfite from sulfate: step 1/3. In terms of biological role, with CysN forms the ATP sulfurylase (ATPS) that catalyzes the adenylation of sulfate producing adenosine 5'-phosphosulfate (APS) and diphosphate, the first enzymatic step in sulfur assimilation pathway. APS synthesis involves the formation of a high-energy phosphoric-sulfuric acid anhydride bond driven by GTP hydrolysis by CysN coupled to ATP hydrolysis by CysD. This Rhizobium meliloti (strain 1021) (Ensifer meliloti) protein is Sulfate adenylyltransferase subunit 2 (cysD).